Here is a 460-residue protein sequence, read N- to C-terminus: Cysteine--tRNA ligase (460 aa).

Cysteine 28 serves as a coordination point for Zn(2+). The 'HIGH' region motif lies at 30 to 40 (VTIYDLCHIGH). 3 residues coordinate Zn(2+): cysteine 209, histidine 234, and glutamate 238. A 'KMSKS' region motif is present at residues 266–270 (KMSKS). Lysine 269 serves as a coordination point for ATP.

Belongs to the class-I aminoacyl-tRNA synthetase family. Monomer. The cofactor is Zn(2+).

Its subcellular location is the cytoplasm. The catalysed reaction is tRNA(Cys) + L-cysteine + ATP = L-cysteinyl-tRNA(Cys) + AMP + diphosphate. This is Cysteine--tRNA ligase from Shewanella frigidimarina (strain NCIMB 400).